The following is a 474-amino-acid chain: Sulfide dehydrogenase subunit alpha (474 aa).

Positions Met-1–Pro-2 are excised as a propeptide. [4Fe-4S] cluster contacts are provided by Cys-42, Cys-45, Cys-52, and Cys-56. The [3Fe-4S] cluster site is built by Cys-101, Cys-107, and Cys-111.

In terms of assembly, heterodimer of alpha and beta subunits. FAD serves as cofactor. Requires [3Fe-4S] cluster as cofactor. It depends on [4Fe-4S] cluster as a cofactor.

The protein localises to the cytoplasm. The catalysed reaction is n sulfur + hydrogen sulfide + NADP(+) = (n+1) sulfur + NADPH. The enzyme catalyses 2 reduced [2Fe-2S]-[ferredoxin] + NADP(+) + H(+) = 2 oxidized [2Fe-2S]-[ferredoxin] + NADPH. In terms of biological role, a bifunctional enzyme that catalyzes the reduction of elemental sulfur or polysulfide to hydrogen sulfide with NADPH as electron donor. Also functions as a reduced ferredoxin:NADP oxidoreductase with a very high affinity for reduced ferredoxin. Exhibits a broad specificity for various physiological and non-physiological substrates with varied reduction potentials such as methyl viologen, benzyl viologen, FAD, FMN, methylene blue, 2,6-dichlorophenolindophenol (DCIP), cytochrome C and ferricyanide with highest preference for benzyl viologen. Does not reduce fumarate, succinate, nitrate, nitrite, sulfate, sulfite or protons. Does not possess any hydrogenase activity or NADPH-dependent glutamate synthase activity. In Pyrococcus furiosus (strain ATCC 43587 / DSM 3638 / JCM 8422 / Vc1), this protein is Sulfide dehydrogenase subunit alpha.